A 391-amino-acid chain; its full sequence is Pectin acetylesterase 11 (391 aa).

Positions 1-23 are cleaved as a signal peptide; that stretch reads MTWLKQMWSSILVLAVVVIGARA. Active-site charge relay system residues include Ser171, Asp267, and His334.

The protein belongs to the pectinacetylesterase family.

The protein resides in the secreted. The protein localises to the cell wall. In terms of biological role, hydrolyzes acetyl esters in homogalacturonan regions of pectin. In type I primary cell wall, galacturonic acid residues of pectin can be acetylated at the O-2 and O-3 positions. Decreasing the degree of acetylation of pectin gels in vitro alters their physical properties. The polypeptide is Pectin acetylesterase 11 (Arabidopsis thaliana (Mouse-ear cress)).